The primary structure comprises 114 residues: Large ribosomal subunit protein bL17 (114 aa).

This sequence belongs to the bacterial ribosomal protein bL17 family. As to quaternary structure, part of the 50S ribosomal subunit. Contacts protein L32.

The protein is Large ribosomal subunit protein bL17 of Halothermothrix orenii (strain H 168 / OCM 544 / DSM 9562).